Reading from the N-terminus, the 587-residue chain is Monocopper oxidase-like protein SKU5 (587 aa).

The signal sequence occupies residues 1-20; it reads MDLFKILLLVFFVNISFCFA. Asn-14 and Asn-58 each carry an N-linked (GlcNAc...) asparagine glycan. His-80 serves as a coordination point for Cu cation. Residues Asn-107, Asn-169, Asn-200, Asn-257, Asn-278, Asn-293, Asn-342, Asn-362, Asn-430, and Asn-444 are each glycosylated (N-linked (GlcNAc...) asparagine). His-452 contacts Cu cation. A glycan (N-linked (GlcNAc...) asparagine) is linked at Asn-534. A lipid anchor (GPI-anchor amidated serine) is attached at Ser-562. Residues 563–587 constitute a propeptide, removed in mature form; that stretch reads ASKSIGFTSLSMVVMALVMMMMLQH.

The protein belongs to the multicopper oxidase family. Cu cation serves as cofactor. In terms of tissue distribution, expressed in roots, hypocotyls, cotyledons, leaves, stems and flowers.

Its subcellular location is the secreted. The protein resides in the cell wall. It is found in the cell membrane. May be a monocopper oxidase of unknown specificity. Involved in directional growth processes, possibly by participating in cell wall expansion. The polypeptide is Monocopper oxidase-like protein SKU5 (SKU5) (Arabidopsis thaliana (Mouse-ear cress)).